The sequence spans 341 residues: N-acetyl-gamma-glutamyl-phosphate reductase (341 aa).

C147 is a catalytic residue.

Belongs to the NAGSA dehydrogenase family. Type 1 subfamily.

It is found in the cytoplasm. It catalyses the reaction N-acetyl-L-glutamate 5-semialdehyde + phosphate + NADP(+) = N-acetyl-L-glutamyl 5-phosphate + NADPH + H(+). It participates in amino-acid biosynthesis; L-arginine biosynthesis; N(2)-acetyl-L-ornithine from L-glutamate: step 3/4. In terms of biological role, catalyzes the NADPH-dependent reduction of N-acetyl-5-glutamyl phosphate to yield N-acetyl-L-glutamate 5-semialdehyde. The sequence is that of N-acetyl-gamma-glutamyl-phosphate reductase from Staphylococcus epidermidis (strain ATCC 35984 / DSM 28319 / BCRC 17069 / CCUG 31568 / BM 3577 / RP62A).